The following is a 623-amino-acid chain: Fanconi anemia group G protein homolog (623 aa).

TPR repeat units follow at residues 251–284 (VQVY…GTTC), 349–382 (SQAK…LLGG), 458–491 (SATH…LFRT), and 517–550 (VAAL…CPGN).

In terms of assembly, belongs to the multisubunit FA complex composed of FANCA, FANCB, FANCC, FANCE, FANCF, FANCG, FANCL/PHF9 and FANCM. In complex with FANCF, FANCA and FANCL, but not with FANCC, nor FANCE, interacts with HES1; this interaction may be essential for the stability and nuclear localization of FA core complex proteins. The complex with FANCC and FANCG may also include EIF2AK2 and HSP70. In terms of tissue distribution, highest expression levels in spleen, thymus and testis.

It is found in the nucleus. DNA repair protein that may operate in a postreplication repair or a cell cycle checkpoint function. May be implicated in interstrand DNA cross-link repair and in the maintenance of normal chromosome stability. Candidate tumor suppressor gene. The chain is Fanconi anemia group G protein homolog (Fancg) from Mus musculus (Mouse).